The sequence spans 181 residues: Isopentenyl-diphosphate Delta-isomerase (181 aa).

Residues histidine 25 and histidine 32 each contribute to the Mn(2+) site. In terms of domain architecture, Nudix hydrolase spans 30–164 (PLHLAFSCWL…PWAFSPWMVM (135 aa)). Cysteine 67 is an active-site residue. A Mg(2+)-binding site is contributed by cysteine 67. Histidine 69 provides a ligand contact to Mn(2+). Glutamate 87 is a Mg(2+) binding site. The Mn(2+) site is built by glutamate 114 and glutamate 116. Glutamate 116 is a catalytic residue.

This sequence belongs to the IPP isomerase type 1 family. Homodimer. Requires Mg(2+) as cofactor. Mn(2+) serves as cofactor.

The protein resides in the cytoplasm. It catalyses the reaction isopentenyl diphosphate = dimethylallyl diphosphate. It functions in the pathway isoprenoid biosynthesis; dimethylallyl diphosphate biosynthesis; dimethylallyl diphosphate from isopentenyl diphosphate: step 1/1. Its function is as follows. Catalyzes the 1,3-allylic rearrangement of the homoallylic substrate isopentenyl (IPP) to its highly electrophilic allylic isomer, dimethylallyl diphosphate (DMAPP). The polypeptide is Isopentenyl-diphosphate Delta-isomerase (Salmonella choleraesuis (strain SC-B67)).